A 765-amino-acid polypeptide reads, in one-letter code: 5-methyltetrahydropteroyltriglutamate--homocysteine methyltransferase (765 aa).

5-methyltetrahydropteroyltri-L-glutamate-binding positions include 16-19 and Lys121; that span reads RELK. Residues 441–443 and Glu494 contribute to the L-homocysteine site; that span reads IGS. L-methionine contacts are provided by residues 441 to 443 and Glu494; that span reads IGS. 5-methyltetrahydropteroyltri-L-glutamate contacts are provided by residues 525–526 and Trp571; that span reads RC. Residue Asp609 coordinates L-homocysteine. Asp609 provides a ligand contact to L-methionine. Glu615 provides a ligand contact to 5-methyltetrahydropteroyltri-L-glutamate. Zn(2+) contacts are provided by His651, Cys653, and Glu675. Catalysis depends on His704, which acts as the Proton donor. Position 736 (Cys736) interacts with Zn(2+).

The protein belongs to the vitamin-B12 independent methionine synthase family. Zn(2+) is required as a cofactor.

The enzyme catalyses 5-methyltetrahydropteroyltri-L-glutamate + L-homocysteine = tetrahydropteroyltri-L-glutamate + L-methionine. It functions in the pathway amino-acid biosynthesis; L-methionine biosynthesis via de novo pathway; L-methionine from L-homocysteine (MetE route): step 1/1. In terms of biological role, catalyzes the transfer of a methyl group from 5-methyltetrahydrofolate to homocysteine resulting in methionine formation. In Saccharophagus degradans (strain 2-40 / ATCC 43961 / DSM 17024), this protein is 5-methyltetrahydropteroyltriglutamate--homocysteine methyltransferase.